Here is a 278-residue protein sequence, read N- to C-terminus: MQVRQSIHSDHAKQLDTAGLRREFLIEKIFAADDYTMTYSHIDRIIVGGILPVSKAVSIGNEVGKQLGVSYFLERRELGAINIGGPGLIVVDGQTYDIGNEEALYVGKGAKEVKFSSIDRANPAKFYYNSAPAHTTYPNKKITLAEASPQTLGDDATSNRRTINKYIVPDVLPTCQLSMGLTKLAPGSLWNTMPCHTHERRMEVYFYFDMDEETAVFHMMGQPQETRHLLVHNEQAVISPSWSIHSGVGTKRYTFIWGMVGENQVFGDMDHIAVSELR.

Residues His196, His198, Glu203, and His245 each contribute to the Zn(2+) site.

This sequence belongs to the KduI family. Requires Zn(2+) as cofactor.

It carries out the reaction 5-dehydro-4-deoxy-D-glucuronate = 3-deoxy-D-glycero-2,5-hexodiulosonate. The protein operates within glycan metabolism; pectin degradation; 2-dehydro-3-deoxy-D-gluconate from pectin: step 4/5. Catalyzes the isomerization of 5-dehydro-4-deoxy-D-glucuronate to 3-deoxy-D-glycero-2,5-hexodiulosonate. The sequence is that of 4-deoxy-L-threo-5-hexosulose-uronate ketol-isomerase from Yersinia pestis bv. Antiqua (strain Antiqua).